A 496-amino-acid chain; its full sequence is ATP-dependent protease ATPase subunit HslU2 (496 aa).

Residues 1–10 constitute a mitochondrion transit peptide; sequence MIRFSWVRLC. ATP is bound by residues Val51 and 94 to 99; that span reads GVGKTE. Low complexity predominate over residues 177 to 191; that stretch reads GSFGSSTRNSGSGDS. The tract at residues 177–204 is disordered; it reads GSFGSSTRNSGSGDSSAEEDKNSSSRDN. ATP contacts are provided by Asp308, Glu374, and Arg446.

This sequence belongs to the ClpX chaperone family. HslU subfamily. As to quaternary structure, a double ring-shaped homohexamer of HslV is capped on each side by a ring-shaped HslU homohexamer. The assembly of the HslU/HslV complex (HslVU) is dependent on binding of ATP.

It localises to the mitochondrion matrix. The protein localises to the kinetoplast. Its function is as follows. ATPase subunit of a proteasome-like degradation complex; this subunit has chaperone activity. The binding of ATP and its subsequent hydrolysis by HslU are essential for unfolding of protein substrates subsequently hydrolyzed by HslV. HslU recognizes the N-terminal part of its protein substrates and unfolds these before they are guided to HslV for hydrolysis. The HslVU protease complex functions in mitochondrial DNA replication by regulating DNA helicase PIF2 protein levels. The chain is ATP-dependent protease ATPase subunit HslU2 (HslU2) from Trypanosoma brucei brucei (strain 927/4 GUTat10.1).